Reading from the N-terminus, the 558-residue chain is NAD-dependent malic enzyme 2 (558 aa).

Tyr101 serves as the catalytic Proton donor. An NAD(+)-binding site is contributed by Arg154. The Proton acceptor role is filled by Lys172. A divalent metal cation-binding residues include Glu243, Asp244, and Asp267. NAD(+)-binding residues include Asp267 and Asn411.

It belongs to the malic enzymes family. Homotetramer. The cofactor is Mg(2+). Mn(2+) is required as a cofactor.

It catalyses the reaction (S)-malate + NAD(+) = pyruvate + CO2 + NADH. The enzyme catalyses oxaloacetate + H(+) = pyruvate + CO2. This Photobacterium profundum (strain SS9) protein is NAD-dependent malic enzyme 2.